The primary structure comprises 118 residues: Large ribosomal subunit protein bL20 (118 aa).

This sequence belongs to the bacterial ribosomal protein bL20 family.

Functionally, binds directly to 23S ribosomal RNA and is necessary for the in vitro assembly process of the 50S ribosomal subunit. It is not involved in the protein synthesizing functions of that subunit. The polypeptide is Large ribosomal subunit protein bL20 (Pectobacterium atrosepticum (strain SCRI 1043 / ATCC BAA-672) (Erwinia carotovora subsp. atroseptica)).